Here is a 602-residue protein sequence, read N- to C-terminus: MFS-type efflux transporter pyiT (602 aa).

The segment at 1–33 (MEKAKDSLPTTGDPVPSQGTINPVDETGGSASD) is disordered. 7 consecutive transmembrane segments (helical) span residues 43 to 63 (FWFT…EGSV), 123 to 143 (WLTI…GGAT), 156 to 176 (GLGS…LLPL), 185 to 205 (IIFM…GILV), 212 to 232 (WVFY…FFFL), 251 to 271 (FFGN…LTYG), and 282 to 302 (IIVS…FEAS). Asparagine 317 carries N-linked (GlcNAc...) asparagine glycosylation. 6 helical membrane passes run 325-345 (IATF…PLYF), 357-377 (GVML…GGAL), 386-406 (NIHF…TILN), 410-430 (SLAV…VPTA), 451-471 (TFAF…AAIF), and 524-544 (LERV…VIFL). Residues 564 to 585 (IPQTAADNSASRPNTINDTASQ) show a composition bias toward polar residues. A disordered region spans residues 564–602 (IPQTAADNSASRPNTINDTASQAPILKQRRSTNQERETV). N-linked (GlcNAc...) asparagine glycosylation is present at asparagine 580.

It belongs to the major facilitator superfamily.

The protein resides in the cell membrane. In terms of biological role, MFS-type efflux transporter; part of the gene cluster that mediates the biosynthesis of the mycotoxin pyrichalasin H, a tyrosine-derived cytochalasan that inhibits the growth of rice seedlings, but also inhibits lymphocyte capping and actin polymerization and alters cell morphology. Pyrichalasin H is indicated as the responsible agent for the genus-specific pathogenicity of M.grisea toward crabgrass. PyiT might be involved in the excretion of pyrichalasin H. The chain is MFS-type efflux transporter pyiT from Pyricularia grisea (Crabgrass-specific blast fungus).